Reading from the N-terminus, the 291-residue chain is Probable prolyl 4-hydroxylase 12 (291 aa).

Residues 1–156 (MACLSRIFLI…GEEPSSVLHE (156 aa)) lie on the Cytoplasmic side of the membrane. The 115-residue stretch at 125–239 (NGGSIKVRSY…LLVATKLIYA (115 aa)) folds into the Fe2OG dioxygenase domain. The Fe cation site is built by K142 and D144. Residues 157–173 (SLLATVVLYLSNTTQGG) form a helical; Signal-anchor for type II membrane protein membrane-spanning segment. The Lumenal portion of the chain corresponds to 174–291 (ELLFPNSEMK…GTCRKSCNAC (118 aa)). A glycan (N-linked (GlcNAc...) asparagine) is linked at N211. H220 is a binding site for Fe cation. The ShKT domain maps to 251–291 (CSDEDENCGRWAKLGECKKNPVYMIGSPDYYGTCRKSCNAC). 3 disulfides stabilise this stretch: C251–C291, C258–C284, and C267–C288.

It belongs to the P4HA family. It depends on Fe(2+) as a cofactor. The cofactor is L-ascorbate.

It is found in the endoplasmic reticulum membrane. It catalyses the reaction L-prolyl-[collagen] + 2-oxoglutarate + O2 = trans-4-hydroxy-L-prolyl-[collagen] + succinate + CO2. Functionally, catalyzes the post-translational formation of 4-hydroxyproline in -Xaa-Pro-Gly- sequences in proline-rich peptide sequences of plant glycoproteins and other proteins. Hydroxyprolines are important constituent of many plant cell wall glycoproteins such as extensins, hydroxyproline-rich glycoproteins, lectins and arabinogalactan proteins. This chain is Probable prolyl 4-hydroxylase 12, found in Arabidopsis thaliana (Mouse-ear cress).